A 166-amino-acid chain; its full sequence is Large ribosomal subunit protein uL10 (166 aa).

It belongs to the universal ribosomal protein uL10 family. As to quaternary structure, part of the ribosomal stalk of the 50S ribosomal subunit. The N-terminus interacts with L11 and the large rRNA to form the base of the stalk. The C-terminus forms an elongated spine to which L12 dimers bind in a sequential fashion forming a multimeric L10(L12)X complex.

Forms part of the ribosomal stalk, playing a central role in the interaction of the ribosome with GTP-bound translation factors. The chain is Large ribosomal subunit protein uL10 from Mesoplasma florum (strain ATCC 33453 / NBRC 100688 / NCTC 11704 / L1) (Acholeplasma florum).